Consider the following 460-residue polypeptide: Cysteine--tRNA ligase (460 aa).

C28 is a binding site for Zn(2+). The 'HIGH' region signature appears at 30-40; that stretch reads MTVYDYCHLGH. Positions 209, 234, and 238 each coordinate Zn(2+). Positions 266 to 270 match the 'KMSKS' region motif; the sequence is KMSKS. K269 contacts ATP.

Belongs to the class-I aminoacyl-tRNA synthetase family. Monomer. Zn(2+) serves as cofactor.

It localises to the cytoplasm. It carries out the reaction tRNA(Cys) + L-cysteine + ATP = L-cysteinyl-tRNA(Cys) + AMP + diphosphate. In Pseudomonas paraeruginosa (strain DSM 24068 / PA7) (Pseudomonas aeruginosa (strain PA7)), this protein is Cysteine--tRNA ligase.